The sequence spans 346 residues: B3 domain-containing protein At3g25182 (346 aa).

The disordered stretch occupies residues 168–187; that stretch reads KRRAVEQRKRTGGVKKAKVA. Residues 237–338 constitute a DNA-binding region (TF-B3); sequence FNNLLRNDFL…ILCFAMEQRS (102 aa).

It localises to the nucleus. The polypeptide is B3 domain-containing protein At3g25182 (Arabidopsis thaliana (Mouse-ear cress)).